Here is a 2537-residue protein sequence, read N- to C-terminus: Histone-lysine N-methyltransferase SETD2 (2537 aa).

Residues methionine 1 to lysine 12 show a composition bias toward pro residues. Disordered stretches follow at residues methionine 1–alanine 31, threonine 91–arginine 142, proline 156–arginine 483, tyrosine 510–arginine 554, and serine 607–lysine 629. Over residues aspartate 18 to alanine 31 the composition is skewed to basic and acidic residues. A compositionally biased stretch (polar residues) spans threonine 91–asparagine 103. Serine 132 carries the phosphoserine modification. The span at proline 156–serine 166 shows a compositional bias: low complexity. Residues proline 187–proline 205 show a composition bias toward pro residues. A Phosphoserine modification is found at serine 242. Residues leucine 264–glutamate 291 show a composition bias toward basic and acidic residues. Phosphoserine occurs at positions 322, 324, and 345. Basic and acidic residues-rich tracts occupy residues arginine 336–arginine 401, arginine 422–arginine 433, proline 440–lysine 468, and tyrosine 510–lysine 528. Lysine 360 participates in a covalent cross-link: Glycyl lysine isopeptide (Lys-Gly) (interchain with G-Cter in SUMO2). Serine 423 bears the Phosphoserine mark. Phosphoserine occurs at positions 532, 614, and 624. Polar residues predominate over residues glycine 613–proline 625. Threonine 626 bears the Phosphothreonine mark. At serine 633 the chain carries Phosphoserine. Lysine 637 participates in a covalent cross-link: Glycyl lysine isopeptide (Lys-Gly) (interchain with G-Cter in SUMO2). 4 positions are modified to phosphoserine: serine 697, serine 707, serine 743, and serine 753. Residues arginine 729–glutamate 749 form a disordered region. A Glycyl lysine isopeptide (Lys-Gly) (interchain with G-Cter in SUMO2) cross-link involves residue lysine 775. 4 disordered regions span residues cysteine 829–aspartate 894, glutamine 941–aspartate 974, glutamate 1015–aspartate 1078, and alanine 1135–proline 1185. Positions aspartate 830 to lysine 847 are enriched in basic and acidic residues. Residues serine 849 to histidine 858 are compositionally biased toward polar residues. Positions proline 867–isoleucine 883 are enriched in low complexity. The segment covering leucine 951 to aspartate 974 has biased composition (basic and acidic residues). The segment covering aspartate 1026 to aspartate 1037 has biased composition (acidic residues). Serine 1077 is subject to Phosphoserine. Over residues serine 1150–arginine 1165 the composition is skewed to basic and acidic residues. Serine 1201 is subject to Phosphoserine. Disordered regions lie at residues glycine 1232 to threonine 1254, tryptophan 1280 to isoleucine 1346, and asparagine 1366 to glutamine 1396. 2 stretches are compositionally biased toward polar residues: residues phenylalanine 1235–threonine 1254 and arginine 1319–asparagine 1329. The segment covering asparagine 1366 to proline 1377 has biased composition (basic and acidic residues). Serine 1387, serine 1389, and serine 1391 each carry phosphoserine. Positions aspartate 1392–serine 1688 are interaction with TUBA1A. Residues isoleucine 1468 to glutamine 1522 form the AWS domain. 7 residues coordinate Zn(2+): cysteine 1473, cysteine 1475, cysteine 1490, cysteine 1494, cysteine 1503, cysteine 1507, and cysteine 1513. In terms of domain architecture, SET spans alanine 1524–glutamine 1641. S-adenosyl-L-methionine-binding positions include lysine 1534–tryptophan 1536, histidine 1577–tyrosine 1579, and asparagine 1602–histidine 1603. Position 1605 (cysteine 1605) interacts with Zn(2+). The Post-SET domain occupies glutamate 1648–glycine 1664. Glutamine 1650 is a binding site for S-adenosyl-L-methionine. Residue cysteine 1652 participates in Zn(2+) binding. An S-adenosyl-L-methionine-binding site is contributed by phenylalanine 1653. Zn(2+)-binding residues include cysteine 1654 and cysteine 1659. A phosphoserine mark is found at serine 1670, serine 1818, and serine 1819. A disordered region spans residues threonine 1806–lysine 1848. The span at serine 1818–aspartate 1833 shows a compositional bias: polar residues. A phosphothreonine mark is found at threonine 1827 and threonine 1846. Residues serine 1862 and serine 1926 each carry the phosphoserine modification. Disordered regions lie at residues serine 1914–aspartate 1981 and leucine 1993–glutamine 2110. Residues threonine 1934–glutamate 1946 show a composition bias toward basic and acidic residues. Over residues threonine 1947–valine 1964 the composition is skewed to acidic residues. 3 positions are modified to phosphoserine: serine 1954, serine 1962, and serine 1969. Composition is skewed to basic and acidic residues over residues glutamate 1965–aspartate 1978, leucine 1993–alanine 2020, and arginine 2032–lysine 2045. Phosphoserine occurs at positions 2053 and 2055. Composition is skewed to basic and acidic residues over residues arginine 2063–aspartate 2073 and lysine 2084–glutamine 2108. Residues serine 2090–methionine 2119 adopt a coiled-coil conformation. Residues glutamine 2110–proline 2339 form a low charge region region. Residues isoleucine 2362 to tryptophan 2395 form the WW domain. Residues leucine 2412 to glutamate 2438 are disordered. The interaction with POLR2A stretch occupies residues threonine 2430–glutamate 2537.

The protein belongs to the class V-like SAM-binding methyltransferase superfamily. Histone-lysine methyltransferase family. SET2 subfamily. As to quaternary structure, specifically interacts with hyperphosphorylated C-terminal domain (CTD) of RNA polymerase II large subunit (POLR2A): binds to CTD heptad repeats doubly phosphorylated on 'Ser-2' and 'Ser-5' of each heptad. Interacts with HTT. Interacts with IWS1. Interacts with p53/TP53; leading to regulate p53/TP53 target genes. Component of a complex with HNRNPL. Interacts with TUBA1A; the interaction is independent on alpha-tubulin acetylation on 'Lys-40'. In terms of processing, may be automethylated.

Its subcellular location is the nucleus. It is found in the chromosome. The catalysed reaction is L-lysyl(36)-[histone H3] + 3 S-adenosyl-L-methionine = N(6),N(6),N(6)-trimethyl-L-lysyl(36)-[histone H3] + 3 S-adenosyl-L-homocysteine + 3 H(+). It carries out the reaction L-lysyl-[protein] + S-adenosyl-L-methionine = N(6)-methyl-L-lysyl-[protein] + S-adenosyl-L-homocysteine + H(+). The enzyme catalyses L-lysyl-[protein] + 3 S-adenosyl-L-methionine = N(6),N(6),N(6)-trimethyl-L-lysyl-[protein] + 3 S-adenosyl-L-homocysteine + 3 H(+). Specifically inhibited by sinefungin derivatives. Its function is as follows. Histone methyltransferase that specifically trimethylates 'Lys-36' of histone H3 (H3K36me3) using dimethylated 'Lys-36' (H3K36me2) as substrate. It is capable of trimethylating unmethylated H3K36 (H3K36me0) in vitro. Represents the main enzyme generating H3K36me3, a specific tag for epigenetic transcriptional activation. Plays a role in chromatin structure modulation during elongation by coordinating recruitment of the FACT complex and by interacting with hyperphosphorylated POLR2A. Acts as a key regulator of DNA mismatch repair in G1 and early S phase by generating H3K36me3, a mark required to recruit MSH6 subunit of the MutS alpha complex: early recruitment of the MutS alpha complex to chromatin to be replicated allows a quick identification of mismatch DNA to initiate the mismatch repair reaction. Required for DNA double-strand break repair in response to DNA damage: acts by mediating formation of H3K36me3, promoting recruitment of RAD51 and DNA repair via homologous recombination (HR). Acts as a tumor suppressor. H3K36me3 also plays an essential role in the maintenance of a heterochromatic state, by recruiting DNA methyltransferase DNMT3A. H3K36me3 is also enhanced in intron-containing genes, suggesting that SETD2 recruitment is enhanced by splicing and that splicing is coupled to recruitment of elongating RNA polymerase. Required during angiogenesis. Required for endoderm development by promoting embryonic stem cell differentiation toward endoderm: acts by mediating formation of H3K36me3 in distal promoter regions of FGFR3, leading to regulate transcription initiation of FGFR3. In addition to histones, also mediates methylation of other proteins, such as tubulins and STAT1. Trimethylates 'Lys-40' of alpha-tubulins such as TUBA1B (alpha-TubK40me3); alpha-TubK40me3 is required for normal mitosis and cytokinesis and may be a specific tag in cytoskeletal remodeling. Involved in interferon-alpha-induced antiviral defense by mediating both monomethylation of STAT1 at 'Lys-525' and catalyzing H3K36me3 on promoters of some interferon-stimulated genes (ISGs) to activate gene transcription. The protein is Histone-lysine N-methyltransferase SETD2 of Mus musculus (Mouse).